A 158-amino-acid chain; its full sequence is MVVRRRKKSRKLRGRTRTMSWGRIGQHRKSGSKGGYGAAGLGKHEWTWTIKYAPTWYGKKGFNPPRIRAGLEVTTINVGQLDEIAALLEAQGKAEKEDGKIVVNLEKLGIHKLLGEGRVARPLKVITPLASELAIKKIEEAGGEVIVTRATREEAEES.

The protein belongs to the universal ribosomal protein uL15 family. In terms of assembly, part of the 50S ribosomal subunit.

Binds to the 23S rRNA. This chain is Large ribosomal subunit protein uL15, found in Aeropyrum pernix (strain ATCC 700893 / DSM 11879 / JCM 9820 / NBRC 100138 / K1).